The chain runs to 194 residues: Peptidyl-tRNA hydrolase (194 aa).

H17 lines the tRNA pocket. Catalysis depends on H22, which acts as the Proton acceptor. Positions 68, 70, and 116 each coordinate tRNA.

It belongs to the PTH family. As to quaternary structure, monomer.

It is found in the cytoplasm. It catalyses the reaction an N-acyl-L-alpha-aminoacyl-tRNA + H2O = an N-acyl-L-amino acid + a tRNA + H(+). Functionally, hydrolyzes ribosome-free peptidyl-tRNAs (with 1 or more amino acids incorporated), which drop off the ribosome during protein synthesis, or as a result of ribosome stalling. Its function is as follows. Catalyzes the release of premature peptidyl moieties from peptidyl-tRNA molecules trapped in stalled 50S ribosomal subunits, and thus maintains levels of free tRNAs and 50S ribosomes. In Xanthomonas oryzae pv. oryzae (strain MAFF 311018), this protein is Peptidyl-tRNA hydrolase.